Consider the following 166-residue polypeptide: Transcriptional repressor NrdR (166 aa).

A zinc finger spans residues 3–34 (CIKCGNMEDKVIDSRPIKEGKSIRRRRECLRC). The region spanning 49–139 (LFVKKRNGSI…VYCKFHDAKD (91 aa)) is the ATP-cone domain.

It belongs to the NrdR family. Zn(2+) serves as cofactor.

In terms of biological role, negatively regulates transcription of bacterial ribonucleotide reductase nrd genes and operons by binding to NrdR-boxes. The protein is Transcriptional repressor NrdR of Methylacidiphilum infernorum (isolate V4) (Methylokorus infernorum (strain V4)).